Reading from the N-terminus, the 396-residue chain is Tryptophan synthase beta chain (396 aa).

N6-(pyridoxal phosphate)lysine is present on Lys-86.

It belongs to the TrpB family. As to quaternary structure, tetramer of two alpha and two beta chains. Requires pyridoxal 5'-phosphate as cofactor.

It carries out the reaction (1S,2R)-1-C-(indol-3-yl)glycerol 3-phosphate + L-serine = D-glyceraldehyde 3-phosphate + L-tryptophan + H2O. It participates in amino-acid biosynthesis; L-tryptophan biosynthesis; L-tryptophan from chorismate: step 5/5. In terms of biological role, the beta subunit is responsible for the synthesis of L-tryptophan from indole and L-serine. In Francisella philomiragia subsp. philomiragia (strain ATCC 25017 / CCUG 19701 / FSC 153 / O#319-036), this protein is Tryptophan synthase beta chain.